We begin with the raw amino-acid sequence, 228 residues long: Putative NAC domain-containing protein 61 (228 aa).

The region spanning 5–156 (LSVGFRFYPT…KSGSSRAFDR (152 aa)) is the NAC domain. Disordered regions lie at residues 77–96 (ARGG…ATGS) and 166–197 (RNLP…QVDL). Over residues 80 to 89 (GRPSRTTGSG) the composition is skewed to low complexity. Over residues 168–193 (LPSNGVETSSRATISTSPETSHSGGN) the composition is skewed to polar residues.

Its subcellular location is the nucleus. This Arabidopsis thaliana (Mouse-ear cress) protein is Putative NAC domain-containing protein 61 (NAC061).